Here is a 113-residue protein sequence, read N- to C-terminus: Tachykinin-4 (113 aa).

Residues 1–20 form the signal peptide; it reads MLPCLALLLLMELSVCTVAG. At Met67 the chain carries Methionine amide. A propeptide spanning residues 71-79 is cleaved from the precursor; the sequence is VGGRPLIQP. Leucine amide is present on Leu95. The propeptide occupies 98–113; sequence RSLFTEGREDEAQGSE.

The protein belongs to the tachykinin family. In terms of tissue distribution, expressed at low levels in the uterus of both pregnant and non-pregnant women. Isoform 1 is found only in the adrenal gland and fetal liver. Isoform 2 is found in heart, liver, bone marrow, prostate, adrenal gland and testis. Isoform 3 and isoform 4 are expressed predominantly in adrenal gland and placenta.

The protein localises to the secreted. Its function is as follows. Tachykinins are active peptides which excite neurons, evoke behavioral responses, are potent vasodilators and secretagogues, and contract (directly or indirectly) many smooth muscles. Endokinin-A induces thermal hyperalgesia and pain-related behavior such as scratching following intrathecal administration in rats. These effects are suppressed by treatment with endokinin-C. Endokinin-A/B reduces arterial blood pressure and increases sperm motility. This Homo sapiens (Human) protein is Tachykinin-4.